The primary structure comprises 686 residues: X-linked interleukin-1 receptor accessory protein-like 2 (686 aa).

Residues 1-16 form the signal peptide; the sequence is MKLPLLLALVVCSAVS. The Extracellular segment spans residues 17–354; the sequence is TNLKMVSKRN…LLRKKDLIYK (338 aa). Residues 32 to 132 enclose the Ig-like C2-type 1 domain; it reads IDWSVDLKTY…YCMKVSMSLT (101 aa). The cysteines at positions 53 and 116 are disulfide-linked. N-linked (GlcNAc...) asparagine glycans are attached at residues asparagine 63, asparagine 120, asparagine 136, asparagine 211, and asparagine 328. Ig-like C2-type domains lie at 141 to 232 and 239 to 347; these read CYNS…LKVT and PPKP…VLLR. Disulfide bonds link cysteine 162-cysteine 214 and cysteine 265-cysteine 331. A helical transmembrane segment spans residues 355–375; sequence IELAGGLGAIFLLLILLLVVY. The Cytoplasmic portion of the chain corresponds to 376-686; the sequence is KCYNIELMLF…KELSFTSDIW (311 aa). The TIR domain maps to 400 to 556; sequence KEYDAYLSYT…KFWKHLVYEM (157 aa). Glutamate 488 is a catalytic residue.

The protein belongs to the interleukin-1 receptor family. In terms of tissue distribution, detected in fetal brain after day 12.5, in particular in parts of the diencephalon and in the basal plate of the spinal cord. In postnatal brain detected in cerebral cortex, olfactory bulb, in the CA1 region of the hippocampus and in Purkinje cells of the Xth cerebellar lobule.

The protein resides in the membrane. The enzyme catalyses NAD(+) + H2O = ADP-D-ribose + nicotinamide + H(+). The polypeptide is X-linked interleukin-1 receptor accessory protein-like 2 (Il1rapl2) (Mus musculus (Mouse)).